The following is a 476-amino-acid chain: Dihydrolipoyl dehydrogenase (476 aa).

FAD-binding positions include 36–45 (EHQERLGGVC), lysine 54, and alanine 117. A disulfide bond links cysteine 45 and cysteine 50. NAD(+) contacts are provided by residues 182 to 186 (GGGII), aspartate 205, valine 238, and 271 to 274 (AIGR). Positions 314 and 322 each coordinate FAD. Histidine 446 serves as the catalytic Proton acceptor.

It belongs to the class-I pyridine nucleotide-disulfide oxidoreductase family. Homodimer. FAD is required as a cofactor.

It localises to the cytoplasm. It carries out the reaction N(6)-[(R)-dihydrolipoyl]-L-lysyl-[protein] + NAD(+) = N(6)-[(R)-lipoyl]-L-lysyl-[protein] + NADH + H(+). Its function is as follows. Lipoamide dehydrogenase is a component of the alpha-ketoacid dehydrogenase complexes. In Buchnera aphidicola subsp. Schizaphis graminum (strain Sg), this protein is Dihydrolipoyl dehydrogenase (lpdA).